We begin with the raw amino-acid sequence, 153 residues long: D-aminoacyl-tRNA deacylase (153 aa).

A Gly-cisPro motif, important for rejection of L-amino acids motif is present at residues 137 to 138 (GP).

This sequence belongs to the DTD family. In terms of assembly, homodimer.

It is found in the cytoplasm. The catalysed reaction is glycyl-tRNA(Ala) + H2O = tRNA(Ala) + glycine + H(+). It catalyses the reaction a D-aminoacyl-tRNA + H2O = a tRNA + a D-alpha-amino acid + H(+). Functionally, an aminoacyl-tRNA editing enzyme that deacylates mischarged D-aminoacyl-tRNAs. Also deacylates mischarged glycyl-tRNA(Ala), protecting cells against glycine mischarging by AlaRS. Acts via tRNA-based rather than protein-based catalysis; rejects L-amino acids rather than detecting D-amino acids in the active site. By recycling D-aminoacyl-tRNA to D-amino acids and free tRNA molecules, this enzyme counteracts the toxicity associated with the formation of D-aminoacyl-tRNA entities in vivo and helps enforce protein L-homochirality. The sequence is that of D-aminoacyl-tRNA deacylase from Dehalococcoides mccartyi (strain ATCC BAA-2100 / JCM 16839 / KCTC 5957 / BAV1).